We begin with the raw amino-acid sequence, 349 residues long: Methylthioribose-1-phosphate isomerase (349 aa).

Substrate contacts are provided by residues Arg51–Ala53, Arg94, and Gln199. The active-site Proton donor is Asp240. Residue Asn250 to Lys251 participates in substrate binding.

Belongs to the eIF-2B alpha/beta/delta subunits family. MtnA subfamily. Homodimer.

It carries out the reaction 5-(methylsulfanyl)-alpha-D-ribose 1-phosphate = 5-(methylsulfanyl)-D-ribulose 1-phosphate. It participates in amino-acid biosynthesis; L-methionine biosynthesis via salvage pathway; L-methionine from S-methyl-5-thio-alpha-D-ribose 1-phosphate: step 1/6. Catalyzes the interconversion of methylthioribose-1-phosphate (MTR-1-P) into methylthioribulose-1-phosphate (MTRu-1-P). The chain is Methylthioribose-1-phosphate isomerase from Bacillus cytotoxicus (strain DSM 22905 / CIP 110041 / 391-98 / NVH 391-98).